We begin with the raw amino-acid sequence, 214 residues long: GTP-binding nuclear protein GSP1 (214 aa).

The Small GTPase Ran-type domain occupies 4 to 172 (RELTYKICLI…LHLARIFTGR (169 aa)). Residue 17 to 22 (GVGKTT) coordinates GTP. Residues 34 to 42 (KNYNATVGA) form a switch-I region. GTP-binding positions include Gly-66, 121-124 (NKID), and 151-153 (SAK). Residues 66 to 82 (GQEKKAVLKDVYYIGAS) are switch-II.

This sequence belongs to the small GTPase superfamily. Ran family. Found in a nuclear export complex with RanGTP, exportin and pre-miRNA.

It is found in the nucleus. In terms of biological role, GTP-binding protein involved in nucleocytoplasmic transport. Required for the import of protein into the nucleus and also for RNA export. The protein is GTP-binding nuclear protein GSP1 (GSP1) of Encephalitozoon cuniculi (strain GB-M1) (Microsporidian parasite).